Consider the following 412-residue polypeptide: Translation initiation factor 2 subunit gamma (412 aa).

The tr-type G domain maps to 7 to 203 (QPEVNIGLVG…AIESEIPTPD (197 aa)). The G1 stretch occupies residues 16–23 (GHVDHGKT). Positions 19, 23, 44, and 46 each coordinate Mg(2+). GTP is bound at residue 19-24 (DHGKTT). The segment at 44 to 48 (GISIR) is G2. Residues 90-93 (DAPG) are G3. Residues 146–149 (NKVD) and 181–183 (SAQ) each bind GTP. The interval 146–149 (NKVD) is G4. The G5 stretch occupies residues 181 to 183 (SAQ).

It belongs to the TRAFAC class translation factor GTPase superfamily. Classic translation factor GTPase family. EIF2G subfamily. Heterotrimer composed of an alpha, a beta and a gamma chain. Mg(2+) is required as a cofactor.

It catalyses the reaction GTP + H2O = GDP + phosphate + H(+). In terms of biological role, eIF-2 functions in the early steps of protein synthesis by forming a ternary complex with GTP and initiator tRNA. The polypeptide is Translation initiation factor 2 subunit gamma (Halorubrum lacusprofundi (strain ATCC 49239 / DSM 5036 / JCM 8891 / ACAM 34)).